The primary structure comprises 406 residues: Tryptophan synthase beta chain (406 aa).

Lys-99 carries the post-translational modification N6-(pyridoxal phosphate)lysine.

The protein belongs to the TrpB family. In terms of assembly, tetramer of two alpha and two beta chains. It depends on pyridoxal 5'-phosphate as a cofactor.

The enzyme catalyses (1S,2R)-1-C-(indol-3-yl)glycerol 3-phosphate + L-serine = D-glyceraldehyde 3-phosphate + L-tryptophan + H2O. Its pathway is amino-acid biosynthesis; L-tryptophan biosynthesis; L-tryptophan from chorismate: step 5/5. The beta subunit is responsible for the synthesis of L-tryptophan from indole and L-serine. In Phenylobacterium zucineum (strain HLK1), this protein is Tryptophan synthase beta chain.